Reading from the N-terminus, the 286-residue chain is 3-hydroxyanthranilate 3,4-dioxygenase (286 aa).

The domain A (catalytic) stretch occupies residues 1–160 (MERPVRVKAW…SEQYRTGKPN (160 aa)). Arg-43 contacts O2. Fe cation is bound by residues His-47, Glu-53, and His-91. A substrate-binding site is contributed by Glu-53. Substrate contacts are provided by Arg-95 and Glu-105. Positions 161-177 (PDQLLKEPPFPLSTRSV) are linker. A domain B region spans residues 178–286 (MEPMCLEAWL…QDPACKKSLG (109 aa)).

Belongs to the 3-HAO family. In terms of assembly, monomer. The cofactor is Fe(2+).

Its subcellular location is the cytoplasm. The protein resides in the cytosol. The enzyme catalyses 3-hydroxyanthranilate + O2 = (2Z,4Z)-2-amino-3-carboxymuconate 6-semialdehyde. It participates in cofactor biosynthesis; NAD(+) biosynthesis; quinolinate from L-kynurenine: step 3/3. Functionally, catalyzes the oxidative ring opening of 3-hydroxyanthranilate to 2-amino-3-carboxymuconate semialdehyde, which spontaneously cyclizes to quinolinate. The chain is 3-hydroxyanthranilate 3,4-dioxygenase from Bos taurus (Bovine).